The chain runs to 620 residues: Chaperone protein HscA homolog (620 aa).

Belongs to the heat shock protein 70 family.

In terms of biological role, chaperone involved in the maturation of iron-sulfur cluster-containing proteins. Has a low intrinsic ATPase activity which is markedly stimulated by HscB. The protein is Chaperone protein HscA homolog of Shewanella oneidensis (strain ATCC 700550 / JCM 31522 / CIP 106686 / LMG 19005 / NCIMB 14063 / MR-1).